A 204-amino-acid polypeptide reads, in one-letter code: MFITLEGGEGVGKTTQQALLAERLQREGYACVSTREPGGTALGEALRELLLHGDPLTPLAELLLYAADRAEHVNKVIAPALAVGQVVICDRFTDSTLAYQGYGRGLNLEQIRQLNHLATGGLQPQLTLWLDLAPEVGLARSRLGDKLEQEHLEFHRRVYRGFQALAAAEPQRIVRIDAGGSPLEVAARIWSVVKPRLLAAVPRP.

G7–T14 serves as a coordination point for ATP.

This sequence belongs to the thymidylate kinase family.

The catalysed reaction is dTMP + ATP = dTDP + ADP. Functionally, phosphorylation of dTMP to form dTDP in both de novo and salvage pathways of dTTP synthesis. This is Thymidylate kinase from Synechococcus sp. (strain JA-3-3Ab) (Cyanobacteria bacterium Yellowstone A-Prime).